The following is a 185-amino-acid chain: Elongation factor P (185 aa).

The protein belongs to the elongation factor P family.

The protein resides in the cytoplasm. The protein operates within protein biosynthesis; polypeptide chain elongation. Involved in peptide bond synthesis. Stimulates efficient translation and peptide-bond synthesis on native or reconstituted 70S ribosomes in vitro. Probably functions indirectly by altering the affinity of the ribosome for aminoacyl-tRNA, thus increasing their reactivity as acceptors for peptidyl transferase. This is Elongation factor P from Burkholderia cenocepacia (strain HI2424).